A 95-amino-acid chain; its full sequence is Large ribosomal subunit protein bL25 (95 aa).

The protein belongs to the bacterial ribosomal protein bL25 family. In terms of assembly, part of the 50S ribosomal subunit; part of the 5S rRNA/L5/L18/L25 subcomplex. Contacts the 5S rRNA. Binds to the 5S rRNA independently of L5 and L18.

This is one of the proteins that binds to the 5S RNA in the ribosome where it forms part of the central protuberance. This Shewanella frigidimarina (strain NCIMB 400) protein is Large ribosomal subunit protein bL25.